We begin with the raw amino-acid sequence, 226 residues long: Ribonuclease 3 (226 aa).

Residues 6 to 128 (INRLQRKLGY…LIGGVFLDSN (123 aa)) form the RNase III domain. Mg(2+) is bound at residue glutamate 41. The active site involves aspartate 45. Mg(2+)-binding residues include aspartate 114 and glutamate 117. Glutamate 117 is an active-site residue. Positions 155-225 (DPKTRLQEYL…AEQVLKKLEL (71 aa)) constitute a DRBM domain.

This sequence belongs to the ribonuclease III family. Homodimer. It depends on Mg(2+) as a cofactor.

The protein resides in the cytoplasm. It carries out the reaction Endonucleolytic cleavage to 5'-phosphomonoester.. Its function is as follows. Digests double-stranded RNA. Involved in the processing of primary rRNA transcript to yield the immediate precursors to the large and small rRNAs (23S and 16S). Processes some mRNAs, and tRNAs when they are encoded in the rRNA operon. Processes pre-crRNA and tracrRNA of type II CRISPR loci if present in the organism. The chain is Ribonuclease 3 from Salmonella choleraesuis (strain SC-B67).